Consider the following 207-residue polypeptide: Segregation and condensation protein B (207 aa).

Belongs to the ScpB family. Homodimer. Homodimerization may be required to stabilize the binding of ScpA to the Smc head domains. Component of a cohesin-like complex composed of ScpA, ScpB and the Smc homodimer, in which ScpA and ScpB bind to the head domain of Smc. The presence of the three proteins is required for the association of the complex with DNA.

The protein localises to the cytoplasm. In terms of biological role, participates in chromosomal partition during cell division. May act via the formation of a condensin-like complex containing Smc and ScpA that pull DNA away from mid-cell into both cell halves. In Mycoplasma genitalium (strain ATCC 33530 / DSM 19775 / NCTC 10195 / G37) (Mycoplasmoides genitalium), this protein is Segregation and condensation protein B.